The following is a 430-amino-acid chain: RPM1 interacting protein 13 (430 aa).

A disordered region spans residues 1-21 (MGSGNHVDIVDVSSGEEDVDT). The segment at 231–300 (RHRIRQPIPH…QVSQSSHHSS (70 aa)) is nuclear localization.

In terms of assembly, interacts with RPM1 (via its NB-ARC domain). Binds to ARF1 in the nucleus.

The protein resides in the nucleus. In terms of biological role, resistance protein interactor which positively enhances RPM1-mediated resistance to necrotrophic bacterial pathogens Pseudomonas syringae pv. tomato DC3000 harboring type III effector protein AvrRpm1 or AvrB, but prevents the hypersensitive response (HR) controlled by RPM1. Together with ARF1, promotes leaf senescence and cell death, probably by facilitating the translocation of ARF1 into the nucleus, and activates ROS-related enzymes (e.g. POD, CAT and SOD). In Arabidopsis thaliana (Mouse-ear cress), this protein is RPM1 interacting protein 13.